Reading from the N-terminus, the 337-residue chain is NADH-quinone oxidoreductase subunit H (337 aa).

Transmembrane regions (helical) follow at residues 9-29 (FAKI…FTYV), 77-97 (FLIA…VIPF), 110-130 (LLYI…AGWA), 154-174 (MGFA…SGIV), 181-201 (FWEW…ISGV), 229-249 (MAFA…SFLA), 274-294 (VPGI…YLWF), and 313-333 (VLIP…YGGV).

It belongs to the complex I subunit 1 family. As to quaternary structure, NDH-1 is composed of 14 different subunits. Subunits NuoA, H, J, K, L, M, N constitute the membrane sector of the complex.

Its subcellular location is the cell inner membrane. The enzyme catalyses a quinone + NADH + 5 H(+)(in) = a quinol + NAD(+) + 4 H(+)(out). Functionally, NDH-1 shuttles electrons from NADH, via FMN and iron-sulfur (Fe-S) centers, to quinones in the respiratory chain. The immediate electron acceptor for the enzyme in this species is believed to be ubiquinone. Couples the redox reaction to proton translocation (for every two electrons transferred, four hydrogen ions are translocated across the cytoplasmic membrane), and thus conserves the redox energy in a proton gradient. This subunit may bind ubiquinone. In Halorhodospira halophila (strain DSM 244 / SL1) (Ectothiorhodospira halophila (strain DSM 244 / SL1)), this protein is NADH-quinone oxidoreductase subunit H.